A 904-amino-acid chain; its full sequence is DNA mismatch repair protein MutS (904 aa).

654-661 contacts ATP; it reads GPNMAGKS.

It belongs to the DNA mismatch repair MutS family.

This protein is involved in the repair of mismatches in DNA. It is possible that it carries out the mismatch recognition step. This protein has a weak ATPase activity. The polypeptide is DNA mismatch repair protein MutS (Caulobacter sp. (strain K31)).